We begin with the raw amino-acid sequence, 1406 residues long: DNA-directed RNA polymerase subunit beta' (1406 aa).

C70, C72, C85, and C88 together coordinate Zn(2+). 3 residues coordinate Mg(2+): D460, D462, and D464. Residues C814, C889, C896, and C899 each contribute to the Zn(2+) site.

This sequence belongs to the RNA polymerase beta' chain family. The RNAP catalytic core consists of 2 alpha, 1 beta, 1 beta' and 1 omega subunit. When a sigma factor is associated with the core the holoenzyme is formed, which can initiate transcription. It depends on Mg(2+) as a cofactor. Zn(2+) is required as a cofactor.

It catalyses the reaction RNA(n) + a ribonucleoside 5'-triphosphate = RNA(n+1) + diphosphate. Its function is as follows. DNA-dependent RNA polymerase catalyzes the transcription of DNA into RNA using the four ribonucleoside triphosphates as substrates. The chain is DNA-directed RNA polymerase subunit beta' from Stenotrophomonas maltophilia (strain K279a).